A 497-amino-acid chain; its full sequence is MRFLISSLLSGLALLTSLHAFVLALPREYTIAMSNPFHESLFSCPAASWPRVKLGSENTPQEPSKDLRKILSQISPKRIEATIRKLVSFGTRHTLSTQTNATYGIGAARDWIESEFQRYANASDGRLTVKVVGYDQQPDGNRIPFPVRISDVVATLKGEGDPERVYVVSGHYDSRNSDPLDYKGIAPGANDDASGVAVSLELARVMSQRDLPRPKATIVFAAVAGEEQGLYGANFLAQSFRNSSTNVEGMFTNDIIGSSTADDGTKEPHVIRLFAQGIPPLNVENQAMRERRIMIGGDNDTPARQLARFVKETAENKHTDMEVSVIYRLDRYLRGGDHRPFLEAGYPAARFTEPNENYAHQHQDIRIDKDPKTGKDIQYGDLPEFCDFDFISRVGKVNAAALWNLAMSPGMPRNVRVNTNALSNDSKFSWDPPAGGNALVGGYEIVWRSTTAPFWTHKMDVGMVQEATIDLSKDNVIFGIRARGKNGERGVAVLPFP.

An N-terminal signal peptide occupies residues 1–24 (MRFLISSLLSGLALLTSLHAFVLA). N-linked (GlcNAc...) asparagine glycans are attached at residues N100 and N121. H171, D191, and E227 together coordinate Zn(2+). N242 carries N-linked (GlcNAc...) asparagine glycosylation. D254 is a Zn(2+) binding site. A Fibronectin type-III domain is found at 411–497 (MPRNVRVNTN…ERGVAVLPFP (87 aa)). A glycan (N-linked (GlcNAc...) asparagine) is linked at N424.

This sequence belongs to the peptidase M28 family. M28B subfamily. Requires Zn(2+) as cofactor.

It localises to the secreted. This Trichophyton verrucosum (strain HKI 0517) protein is Probable zinc metalloprotease TRV_03476.